Here is a 673-residue protein sequence, read N- to C-terminus: DNA ligase (673 aa).

Residues 38-42 (DSVYD), 87-88 (SL), and Glu119 contribute to the NAD(+) site. The active-site N6-AMP-lysine intermediate is Lys121. Residues Arg142, Glu179, Lys296, and Lys320 each coordinate NAD(+). Residues Cys414, Cys417, Cys432, and Cys438 each coordinate Zn(2+). The 79-residue stretch at 595–673 (VVKSEIAGKT…EEAFLKLLKS (79 aa)) folds into the BRCT domain.

The protein belongs to the NAD-dependent DNA ligase family. LigA subfamily. Mg(2+) is required as a cofactor. The cofactor is Mn(2+).

The catalysed reaction is NAD(+) + (deoxyribonucleotide)n-3'-hydroxyl + 5'-phospho-(deoxyribonucleotide)m = (deoxyribonucleotide)n+m + AMP + beta-nicotinamide D-nucleotide.. In terms of biological role, DNA ligase that catalyzes the formation of phosphodiester linkages between 5'-phosphoryl and 3'-hydroxyl groups in double-stranded DNA using NAD as a coenzyme and as the energy source for the reaction. It is essential for DNA replication and repair of damaged DNA. This is DNA ligase from Coxiella burnetii (strain CbuK_Q154) (Coxiella burnetii (strain Q154)).